The sequence spans 244 residues: High affinity immunoglobulin epsilon receptor subunit beta (244 aa).

Residues 1–59 are Cytoplasmic-facing; it reads MDTESNRRANLALPQEPSSVPAFEVLEISPQEVSSGRLLKSASSPPLHTWLTVLKKEQE. Residues 60–79 traverse the membrane as a helical segment; that stretch reads FLGVTQILTAMICLCFGTVV. At 80-97 the chain is on the extracellular side; it reads CSVLDISHIEGDIFSSFK. Residues 98–117 traverse the membrane as a helical segment; that stretch reads AGYPFWGAIFFSISGMLSII. Topologically, residues 118–130 are cytoplasmic; that stretch reads SERRNATYLVRGS. Residues 131 to 150 traverse the membrane as a helical segment; the sequence is LGANTASSIAGGTGITILII. Over 151 to 180 the chain is Extracellular; that stretch reads NLKKSLAYIHIHSCQKFFETKCFMASFSTE. Residues 181-200 form a helical membrane-spanning segment; the sequence is IVVMMLFLTILGLGSAVSLT. The Cytoplasmic segment spans residues 201-244; that stretch reads ICGAGEELKGNKVPEDRVYEELNIYSATYSELEDPGEMSPPIDL. 2 positions are modified to phosphotyrosine: tyrosine 219 and tyrosine 225. Serine 226 bears the Phosphoserine mark. Tyrosine 229 bears the Phosphotyrosine mark.

Belongs to the MS4A family. In terms of assembly, tetramer of an alpha chain, a beta chain, and two disulfide linked gamma chains. Binds LILRB1. Interacts with FGR, FES/FPS and LYN. In terms of processing, phosphorylated on tyrosine residues by LYN. As to expression, found on the surface of mast cells and basophils.

Its subcellular location is the membrane. In terms of biological role, high affinity receptor that binds to the Fc region of immunoglobulins epsilon. Aggregation of FCER1 by multivalent antigens is required for the full mast cell response, including the release of preformed mediators (such as histamine) by degranulation and de novo production of lipid mediators and cytokines. Also mediates the secretion of important lymphokines. Binding of allergen to receptor-bound IgE leads to cell activation and the release of mediators responsible for the manifestations of allergy. This is High affinity immunoglobulin epsilon receptor subunit beta (MS4A2) from Homo sapiens (Human).